The chain runs to 383 residues: tRNA-specific 2-thiouridylase MnmA (383 aa).

Residues 9 to 16 (GMSGGVDS) and Met-35 contribute to the ATP site. The interval 95 to 97 (NPD) is interaction with target base in tRNA. Catalysis depends on Cys-100, which acts as the Nucleophile. Cys-100 and Cys-198 are disulfide-bonded. Gly-124 provides a ligand contact to ATP. The interval 148–150 (KDQ) is interaction with tRNA. Cys-198 acts as the Cysteine persulfide intermediate in catalysis. Residues 310 to 311 (RY) form an interaction with tRNA region.

The protein belongs to the MnmA/TRMU family.

Its subcellular location is the cytoplasm. It catalyses the reaction S-sulfanyl-L-cysteinyl-[protein] + uridine(34) in tRNA + AH2 + ATP = 2-thiouridine(34) in tRNA + L-cysteinyl-[protein] + A + AMP + diphosphate + H(+). Its function is as follows. Catalyzes the 2-thiolation of uridine at the wobble position (U34) of tRNA, leading to the formation of s(2)U34. The polypeptide is tRNA-specific 2-thiouridylase MnmA (Paraburkholderia phytofirmans (strain DSM 17436 / LMG 22146 / PsJN) (Burkholderia phytofirmans)).